The primary structure comprises 266 residues: Eukaryotic translation initiation factor 3 subunit J (266 aa).

2 disordered regions span residues 1-142 (MAPS…VSDS) and 215-243 (MSNE…VSLV). Residues 26 to 44 (DEEEEDVLDSWDAAEDSEV) are compositionally biased toward acidic residues. Residues 40–99 (EDSEVEREKAAKAAEAKAKAEAEAAAKKKSKAQRIQEHKEERKKREEEDSSSESEEDEAE) are a coiled coil. Basic and acidic residues-rich tracts occupy residues 45–65 (EREK…EAAA) and 73–86 (RIQE…KREE). Acidic residues predominate over residues 87 to 97 (EDSSSESEEDE). 2 stretches are compositionally biased toward basic and acidic residues: residues 98–118 (AERR…HAED) and 218–230 (EKMR…DKGN).

It belongs to the eIF-3 subunit J family. Component of the eukaryotic translation initiation factor 3 (eIF-3) complex.

The protein localises to the cytoplasm. Functionally, component of the eukaryotic translation initiation factor 3 (eIF-3) complex, which is involved in protein synthesis of a specialized repertoire of mRNAs and, together with other initiation factors, stimulates binding of mRNA and methionyl-tRNAi to the 40S ribosome. The eIF-3 complex specifically targets and initiates translation of a subset of mRNAs involved in cell proliferation. The polypeptide is Eukaryotic translation initiation factor 3 subunit J (hcr1) (Aspergillus terreus (strain NIH 2624 / FGSC A1156)).